The primary structure comprises 214 residues: MIFITGTDTGIGKTYVSSILAENLKKMGINVGYLKPVETGGREDTLTLKNILNTDDDLDLMNPINLKLPLSPNIAFDVENSPLTLDEIKEKIKNAYETLKEKYDFLIVEGAGGVCVPIKEDFLMSDLIKFLGLDAVVVSRPNLGTINHTLLTVEHLRNKGINVRGVIINCITDLSEVLYYEKTFETIEKVGNIEIIGIVKSREDFEIDFEKILR.

10 to 15 (GIGKTY) is a binding site for ATP. Threonine 14 contributes to the Mg(2+) binding site. Residue lysine 35 is part of the active site. A substrate-binding site is contributed by threonine 39. Residues aspartate 44, 109 to 112 (EGAG), and 169 to 170 (NC) each bind ATP. Residues aspartate 44 and glutamate 109 each coordinate Mg(2+).

Belongs to the dethiobiotin synthetase family. Homodimer. Mg(2+) is required as a cofactor.

The protein resides in the cytoplasm. It catalyses the reaction (7R,8S)-7,8-diammoniononanoate + CO2 + ATP = (4R,5S)-dethiobiotin + ADP + phosphate + 3 H(+). It participates in cofactor biosynthesis; biotin biosynthesis; biotin from 7,8-diaminononanoate: step 1/2. Catalyzes a mechanistically unusual reaction, the ATP-dependent insertion of CO2 between the N7 and N8 nitrogen atoms of 7,8-diaminopelargonic acid (DAPA, also called 7,8-diammoniononanoate) to form a ureido ring. This Methanocaldococcus jannaschii (strain ATCC 43067 / DSM 2661 / JAL-1 / JCM 10045 / NBRC 100440) (Methanococcus jannaschii) protein is ATP-dependent dethiobiotin synthetase BioD.